The chain runs to 421 residues: Alpha-tubulin N-acetyltransferase 1 (421 aa).

The 190-residue stretch at 1–190 (MEFPFDVDAL…NNFVIFEGFF (190 aa)) folds into the N-acetyltransferase domain. Lys-56 carries the post-translational modification N6-acetyllysine; by autocatalysis. Acetyl-CoA is bound at residue 124 to 137 (FYIHESVQRHGHGR). Lys-146 carries the post-translational modification N6-acetyllysine; by autocatalysis. 160–169 (SPKLLKFLNK) contributes to the acetyl-CoA binding site. Residues 214-235 (PIPAAPARKLPPKRAEGDIKPY) are disordered. Over residues 226–235 (KRAEGDIKPY) the composition is skewed to basic and acidic residues. 2 positions are modified to N6-acetyllysine; by autocatalysis: Lys-233 and Lys-244. Residues 252–284 (PLNRAPRRATPPAHPPPRSSSLGNSPDRGPLRP) form a disordered region. Phosphoserine is present on residues Ser-272 and Ser-276. Arg-305 is subject to Asymmetric dimethylarginine. At Ser-315 the chain carries Phosphoserine. An Omega-N-methylarginine modification is found at Arg-323. Over residues 342-351 (FNTSFLGTGN) the composition is skewed to polar residues. The disordered stretch occupies residues 342–398 (FNTSFLGTGNQERKQGEQEAEDRSASEDQVLLQDGSGEEPTHTVAPRAQAPPAQSWM). Residues 352-367 (QERKQGEQEAEDRSAS) show a composition bias toward basic and acidic residues.

This sequence belongs to the acetyltransferase ATAT1 family. As to quaternary structure, component of the BBSome complex. Interacts with AP2 alpha-adaptins, including AP2A2, but not with AP1 gamma-adaptin (AP1G1/AP1G2); this interaction is required for efficient alpha-tubulin acetylation, hence clathrin-coated pits are sites of microtubule acetylation. Autoacetylation strongly increases tubulin acetylation.

It localises to the cytoplasm. The protein resides in the membrane. It is found in the clathrin-coated pit. The protein localises to the cell junction. Its subcellular location is the focal adhesion. It localises to the cell projection. The protein resides in the axon. It is found in the cytoskeleton. The protein localises to the spindle. The catalysed reaction is L-lysyl-[alpha-tubulin] + acetyl-CoA = N(6)-acetyl-L-lysyl-[alpha-tubulin] + CoA + H(+). Specifically acetylates 'Lys-40' in alpha-tubulin on the lumenal side of microtubules. Promotes microtubule destabilization and accelerates microtubule dynamics; this activity may be independent of acetylation activity. Acetylates alpha-tubulin with a slow enzymatic rate, due to a catalytic site that is not optimized for acetyl transfer. Enters the microtubule through each end and diffuses quickly throughout the lumen of microtubules. Acetylates only long/old microtubules because of its slow acetylation rate since it does not have time to act on dynamically unstable microtubules before the enzyme is released. Required for normal sperm flagellar function. Promotes directional cell locomotion and chemotaxis, through AP2A2-dependent acetylation of alpha-tubulin at clathrin-coated pits that are concentrated at the leading edge of migrating cells. May facilitate primary cilium assembly. The polypeptide is Alpha-tubulin N-acetyltransferase 1 (Rattus norvegicus (Rat)).